The following is a 95-amino-acid chain: Large ribosomal subunit protein uL23c (95 aa).

The protein belongs to the universal ribosomal protein uL23 family. Part of the 50S ribosomal subunit.

Its subcellular location is the plastid. It localises to the chloroplast. In terms of biological role, binds to 23S rRNA. The chain is Large ribosomal subunit protein uL23c (rpl23) from Chlamydomonas reinhardtii (Chlamydomonas smithii).